The sequence spans 20 residues: LHSNLEYQYRYSGRVASGIP.

The Vitellogenin domain maps to 1–20; it reads LHSNLEYQYRYSGRVASGIP.

In terms of tissue distribution, secreted into the hemolymph.

The protein resides in the secreted. The protein localises to the extracellular space. Its function is as follows. Involved in lipid transport. Plays a role in hemolymph clotting. May be involved in wound healing in the cuticle. The polypeptide is Fibrinogen (Pacifastacus leniusculus (Signal crayfish)).